Here is a 274-residue protein sequence, read N- to C-terminus: tRNA-cytidine(32) 2-sulfurtransferase (274 aa).

The PP-loop motif signature appears at S40–S45. The [4Fe-4S] cluster site is built by C115, C118, and C206.

This sequence belongs to the TtcA family. As to quaternary structure, homodimer. The cofactor is Mg(2+). It depends on [4Fe-4S] cluster as a cofactor.

The protein localises to the cytoplasm. It carries out the reaction cytidine(32) in tRNA + S-sulfanyl-L-cysteinyl-[cysteine desulfurase] + AH2 + ATP = 2-thiocytidine(32) in tRNA + L-cysteinyl-[cysteine desulfurase] + A + AMP + diphosphate + H(+). It functions in the pathway tRNA modification. In terms of biological role, catalyzes the ATP-dependent 2-thiolation of cytidine in position 32 of tRNA, to form 2-thiocytidine (s(2)C32). The sulfur atoms are provided by the cysteine/cysteine desulfurase (IscS) system. In Stutzerimonas stutzeri (strain A1501) (Pseudomonas stutzeri), this protein is tRNA-cytidine(32) 2-sulfurtransferase.